A 380-amino-acid polypeptide reads, in one-letter code: uncharacterized protein (380 aa).

Residues 1-18 (MALRHLALLAGLLVGVAS) form the signal peptide. N-linked (GlcNAc...) asparagine glycosylation is found at N104, N111, and N128. Residues 148-168 (LFLGTFFISSGLILSVAGFFY) form a helical membrane-spanning segment. Disordered stretches follow at residues 229–256 (PQTGLPGSGSRPPLPGSPGDPPTRQGQG) and 336–380 (RFSG…ISNV). Residues 240–249 (PPLPGSPGDP) are compositionally biased toward pro residues. The span at 356-366 (VRRERPLDRAT) shows a compositional bias: basic and acidic residues.

The protein resides in the membrane. This is an uncharacterized protein from Homo sapiens (Human).